Reading from the N-terminus, the 340-residue chain is Guanine nucleotide-binding protein G(I)/G(S)/G(T) subunit beta-1 (340 aa).

WD repeat units lie at residues 53 to 83 (GHLA…IIWD), 95 to 125 (LRSS…SIYN), 141 to 170 (GHTG…ALWD), 182 to 212 (GHTG…KLWD), 224 to 254 (GHES…RLFD), 268 to 298 (NIIC…NVWD), and 310 to 340 (GHDN…KIWN).

It belongs to the WD repeat G protein beta family. In terms of assembly, g proteins are composed of 3 units, alpha, beta and gamma.

Its function is as follows. Guanine nucleotide-binding proteins (G proteins) are involved as a modulator or transducer in various transmembrane signaling systems. The beta and gamma chains are required for the GTPase activity, for replacement of GDP by GTP, and for G protein-effector interaction. This is Guanine nucleotide-binding protein G(I)/G(S)/G(T) subunit beta-1 (gnb1) from Danio rerio (Zebrafish).